Reading from the N-terminus, the 614-residue chain is MIIATAGHVDHGKTTLLQAITGVNADRLPEEKKRGMTIDLGYAYWPQPDGRVPGFIDVPGHEKFLSNMLAGVGGIDHALLVVACDDGVMAQTREHLAILQLTGNPMLTVALTKADRVDEARVDEVERQVKEVLREYGFAEAKLFITAATEGRGMDALREHLLQLPEREHASQHSFRLAIDRAFTVKGAGLVVTGTALSGEVKVGDSLWLTGVNKPMRVRALHAQNQPTETANAGQRIALNIAGDAEKEQINRGDWLLADVPPEPFTRVIVELQTHTPLTQWQPLHIHHAASHVTGRVSLLEDNLAELVFDTPLWLADNDRLVLRDISARNTLAGARVVMLNPPRRGKRKPEYLQWLASLARAQSDADALSVHLERGAVNLADFAWARQLNGEGMRELLQQPGYIQAGYSLLNAPVAARWQRKILDTLATYHEQHRDEPGPGRERLRRMALPMEDEALVLLLIEKMRESGDIHSHHGWLHLPDHKAGFSEEQQAIWQKAEPLFGDEPWWVRDLAKETGTDEQAMRLTLRQAAQQGIITAIVKDRYYRNDRIVEFANMIRDLDQECGSTCAADFRDRLGVGRKLAIQILEYFDRIGFTRRRGNDHLLRDALLFPEK.

Positions 1–173 (MIIATAGHVD…LPEREHASQH (173 aa)) constitute a tr-type G domain. Residues 7–14 (GHVDHGKT) are G1. 7–14 (GHVDHGKT) is a binding site for GTP. A G2 region spans residues 35 to 39 (GMTID). The tract at residues 57 to 60 (DVPG) is G3. GTP-binding positions include 57-61 (DVPGH) and 112-115 (TKAD). Positions 112 to 115 (TKAD) are G4. The interval 147-149 (AAT) is G5.

The protein belongs to the TRAFAC class translation factor GTPase superfamily. Classic translation factor GTPase family. SelB subfamily.

The protein localises to the cytoplasm. Functionally, translation factor necessary for the incorporation of selenocysteine into proteins. It probably replaces EF-Tu for the insertion of selenocysteine directed by the UGA codon. SelB binds GTP and GDP. This is Selenocysteine-specific elongation factor (selB) from Escherichia coli (strain K12).